The sequence spans 1692 residues: Adenylate cyclase (1692 aa).

Disordered stretches follow at residues 1 to 22 and 103 to 142; these read MDQS…FKTG and SLSD…YKEN. Residues 120 to 132 show a composition bias toward basic and acidic residues; it reads ESSEKSEVPRDTR. The segment at 174–195 is required for interaction with gpa2; the sequence is FTNLTFPEPISDDSDSVEFQRD. Residues 292–380 enclose the Ras-associating domain; that stretch reads KEFFLRVYRD…SDEEINEEDN (89 aa). LRR repeat units lie at residues 430 to 450, 454 to 474, 477 to 498, 503 to 524, 526 to 547, 549 to 570, 572 to 594, 596 to 617, 618 to 639, 660 to 681, 684 to 705, 707 to 729, 730 to 751, 753 to 774, 783 to 805, 807 to 827, 831 to 852, 855 to 876, 878 to 899, 901 to 922, and 930 to 951; these read ELIS…DFME, KLKR…PITA, QLEV…IFSG, SLKE…TRYL, NLTY…ITEL, QLET…IGSL, KLKH…IGLL, NLET…SECP, KLNS…NPSA, NLVY…VIET, NVET…ISAM, NLKY…GKLK, HLVH…VWQV, SLKV…VATS, QLKI…EFVM, TVEE…TALE, CLKV…FFQN, DLKH…STAQ, LLET…EALS, SLRF…KAEK, and QLEY…EDTN. Residues 995-1275 enclose the PPM-type phosphatase domain; sequence RYGVCGYLSR…KNVLVVIVEL (281 aa). A Guanylate cyclase domain is found at 1332–1469; that stretch reads AMVFTDIKNS…PVVNRTSRVV (138 aa). D1337 and D1380 together coordinate Mg(2+). Residues D1337 and D1380 each contribute to the Mn(2+) site. A compositionally biased stretch (basic and acidic residues) spans 1585–1597; it reads SDSKSVHGEEGGS. Residues 1585-1614 are disordered; sequence SDSKSVHGEEGGSGKRSVSSLRNVSPSEST. The span at 1600-1614 shows a compositional bias: polar residues; the sequence is RSVSSLRNVSPSEST.

It belongs to the adenylyl cyclase class-3 family. As to quaternary structure, interacts (via N-terminus) with gpa2; the interaction is direct and serves to activate adenylate cyclase and cAMP-PKA signaling, to repress sexual development and gluconeogenesis. Interacts with git1. It depends on Mn(2+) as a cofactor.

Its subcellular location is the cytoplasm. It carries out the reaction ATP = 3',5'-cyclic AMP + diphosphate. Activated by binding G protein gpa2. Activated by git1. In contrast to yeast cyclase, S.pombe cyclase is not likely to be regulated by RAS proteins. In terms of biological role, acts in glucose-induced cAMP signaling by catalyzing the synthesis of the second messenger, cAMP to activate PKA signaling and repress sexual development and gluconeogenesis. This Schizosaccharomyces pombe (strain 972 / ATCC 24843) (Fission yeast) protein is Adenylate cyclase.